The primary structure comprises 340 residues: N-acetyl-gamma-glutamyl-phosphate reductase (340 aa).

Cysteine 146 is a catalytic residue.

Belongs to the NAGSA dehydrogenase family. Type 1 subfamily.

Its subcellular location is the cytoplasm. The enzyme catalyses N-acetyl-L-glutamate 5-semialdehyde + phosphate + NADP(+) = N-acetyl-L-glutamyl 5-phosphate + NADPH + H(+). It functions in the pathway amino-acid biosynthesis; L-arginine biosynthesis; N(2)-acetyl-L-ornithine from L-glutamate: step 3/4. Catalyzes the NADPH-dependent reduction of N-acetyl-5-glutamyl phosphate to yield N-acetyl-L-glutamate 5-semialdehyde. This chain is N-acetyl-gamma-glutamyl-phosphate reductase, found in Streptococcus mutans serotype c (strain ATCC 700610 / UA159).